A 232-amino-acid polypeptide reads, in one-letter code: Large ribosomal subunit protein uL1 (232 aa).

This sequence belongs to the universal ribosomal protein uL1 family. In terms of assembly, part of the 50S ribosomal subunit.

Functionally, binds directly to 23S rRNA. The L1 stalk is quite mobile in the ribosome, and is involved in E site tRNA release. Protein L1 is also a translational repressor protein, it controls the translation of the L11 operon by binding to its mRNA. In Marinobacter nauticus (strain ATCC 700491 / DSM 11845 / VT8) (Marinobacter aquaeolei), this protein is Large ribosomal subunit protein uL1.